Consider the following 161-residue polypeptide: Kininogen-2 (161 aa).

The first 23 residues, 1–23 (MRLWFCLSFFVVLCLEHFPGTLA), serve as a signal peptide directing secretion. A disulfide bond links C150 and C156. Valine amide is present on V160.

This sequence belongs to the bradykinin-related peptide family. In terms of tissue distribution, expressed by the skin glands.

Its subcellular location is the secreted. Inhibits ACE with a Ki of 1.6 uM, and targets B2 bradykinin receptor (BDKRB2). Provokes contraction of smooth muscle preparation (ileum). In vivo, induces an early hyperalgesic effects in living rats after intraplantar injection. In terms of biological role, inhibits the bradykinin-induced in vitro relaxation of rat arterial smooth muscle and constriction of intestinal smooth muscle. May target bradykinin receptors (BDKRB). The chain is Kininogen-2 from Bombina orientalis (Oriental fire-bellied toad).